The primary structure comprises 308 residues: Pycsar effector protein PaPycTIR (308 aa).

54 to 143 (LITEDAEDSE…RQVTRQLVDR (90 aa)) contacts a nucleoside 3',5'-cyclic phosphate. The interval 160–278 (VFIICSVEAL…DLKGLTTIGY (119 aa)) is TIR-like.

It localises to the cytoplasm. The catalysed reaction is NAD(+) + H2O = ADP-D-ribose + nicotinamide + H(+). In terms of biological role, pycsar (pyrimidine cyclase system for antiphage resistance) provides immunity against bacteriophage. The pyrimidine cyclase (PycC) synthesizes cyclic nucleotides in response to infection; these serve as specific second messenger signals. The signals activate the adjacent effector, leading to bacterial cell death and abortive phage infection. A clade A Pycsar system. The effector gene of a two-gene Pycsar system. Expression of this and adjacent uridylate cyclase PaPycC (AC P0DV40) probably confers resistance to bacteriophage. The genes are probably only expressed in response to bacteriophage infection. Probably only responds to cUMP (produced by its cognate NTP cyclase), acts by depleting cellular NAD(+) levels. The polypeptide is Pycsar effector protein PaPycTIR (Pseudomonas aeruginosa).